Reading from the N-terminus, the 681-residue chain is MMEKGIWKDALIQSTKKLSPKLQVKNPVMLLVYVGAILATSLYFLGFFGISDEKSGYTLAIALILWFTVLFANFAEAIAEGRGRAQADSLKMARKDVLARKLKHIDDKTDVIEVASNDLKKDDIVYVLANEQIPMDGEVIEGAASVDESAITGESAPVIRESGGDRSAVTGGTTLVSDWLVIRVTAVSGESFLDKMIAMVEGASRKKTPNEIALQILLVTLSIIFLAVSATLLPFTEFASKQAGSGSAISITNVIALLVCLAPTTIGALLSSIGIAGMSRLNQANVLAMSGRAIEAAGDVDVLLLDKTGTITLGNRKASEFIPVDGVTEQELADAAQLSSIADETAEGRSIVVLAKERFDIRGRDFAEMHAEFVPFTATTRMSGIDYQENTIRKGAADAVRTYVTANGGTYPQECDAIVSKVAGAGGTPLVVVRNNKVLGVIYLKDIVKNGVKERFLDLRKMGIKTIMITGDNPMTAAAIAAEAGVDDFLAEATPEAKLELIREYQREGHLVAMTGDGTNDAPALAQADVAVAMNTGTQAAKEAGNMVDLDSSPTKLIDIVRIGKQLLMTRGALTTFSVANDLAKYFAIIPVLFYGIFPQLEALNLMGLTSPTSAILSAIIYNALIIIFLIPLSLKGVKYREMPAGKLLSRNMLIYGLGGLVAPFIAIKLIDMLLTVLGIV.

Helical transmembrane passes span 30-50, 59-79, 216-236, and 255-275; these read LLVYVGAILATSLYFLGFFGI, LAIALILWFTVLFANFAEAIA, ILLVTLSIIFLAVSATLLPFT, and IALLVCLAPTTIGALLSSIGI. Residue aspartate 306 is the 4-aspartylphosphate intermediate of the active site. Residues aspartate 343, glutamate 347, 376–383, and lysine 394 contribute to the ATP site; that span reads FTATTRMS. Mg(2+) contacts are provided by aspartate 517 and aspartate 521. 3 helical membrane-spanning segments follow: residues 587–607, 615–635, and 661–681; these read FAIIPVLFYGIFPQLEALNLM, AILSAIIYNALIIIFLIPLSL, and LVAPFIAIKLIDMLLTVLGIV.

It belongs to the cation transport ATPase (P-type) (TC 3.A.3) family. Type IA subfamily. As to quaternary structure, the system is composed of three essential subunits: KdpA, KdpB and KdpC.

The protein resides in the cell membrane. The catalysed reaction is K(+)(out) + ATP + H2O = K(+)(in) + ADP + phosphate + H(+). Its function is as follows. Part of the high-affinity ATP-driven potassium transport (or Kdp) system, which catalyzes the hydrolysis of ATP coupled with the electrogenic transport of potassium into the cytoplasm. This subunit is responsible for energy coupling to the transport system and for the release of the potassium ions to the cytoplasm. This is Potassium-transporting ATPase ATP-binding subunit from Listeria welshimeri serovar 6b (strain ATCC 35897 / DSM 20650 / CCUG 15529 / CIP 8149 / NCTC 11857 / SLCC 5334 / V8).